The sequence spans 370 residues: Transcription factor E2F2 (370 aa).

The interval 1–73 is disordered; sequence MYKRKTASIV…QSQSQPGQQR (73 aa). Residues 15–26 are compositionally biased toward low complexity; the sequence is SAAGTTSSAMMM. Polar residues predominate over residues 31–49; it reads AETSVRSQSYESTPVSMDT. Low complexity predominate over residues 59–73; sequence SPSNSQSQSQPGQQR. Residues 72–137 mediate DNA binding; that stretch reads QRSVGSLVLL…GRHCSLVRWR (66 aa). Positions 137–226 are dimerization; that stretch reads RGGGFNNAKD…VDIKRNHYEL (90 aa).

Belongs to the E2F/DP family. As to quaternary structure, forms a heterodimer with Dp. Interacts with Rbf/Rbf1 and Rbf2. Component of the DREAM complex, which is at least composed of Myb, Caf1-55, mip40, mip120, mip130, E2f2, Dp, Rbf, Rbf2, lin-52, HDAC1/Rpd3 and l(3)mbt. In terms of tissue distribution, ubiquitously expressed in eye disk.

It localises to the nucleus. Functionally, transcriptional repressor that binds to E2f sites and represses E2f-regulated target genes. Binding to E2f sites requires transcription factor Dp. Acts synergistically with Rbf2 to antagonize E2f1-mediated transcriptional activation. Component of the DREAM complex, a multiprotein complex that can both act as a transcription activator or repressor depending on the context. The DREAM complex is required for recruiting E2f2 at differentiation-specific promoters and for stabilizing E2f2-Rbf complexes during S phase. During development, the complex represses transcription of developmentally controlled E2f target genes. During oogenesis, plays a role in restricting DNA synthesis to sites of chorion gene amplification in late stage ovarian follicle cells. Plays an inhibitory role in ionizing radiation (IR)-induced p53-independent apoptosis. May be involved in cell cycle exit by temporarily limiting CycE-dependent activation of E2f-regulated transcription. This chain is Transcription factor E2F2 (E2f2), found in Drosophila melanogaster (Fruit fly).